The chain runs to 337 residues: Eukaryotic translation initiation factor 3 subunit I (337 aa).

WD repeat units follow at residues 8–47, 50–91, 147–186, 191–230, and 288–327; these read GHER…RLGT, GHQG…KVWD, CTES…QLEN, EFDH…ILKT, and GHFG…FDFM.

The protein belongs to the eIF-3 subunit I family. Component of the eukaryotic translation initiation factor 3 (eIF-3) complex.

The protein resides in the cytoplasm. In terms of biological role, component of the eukaryotic translation initiation factor 3 (eIF-3) complex, which is involved in protein synthesis of a specialized repertoire of mRNAs and, together with other initiation factors, stimulates binding of mRNA and methionyl-tRNAi to the 40S ribosome. The eIF-3 complex specifically targets and initiates translation of a subset of mRNAs involved in cell proliferation. This Aspergillus niger (strain ATCC MYA-4892 / CBS 513.88 / FGSC A1513) protein is Eukaryotic translation initiation factor 3 subunit I (tif34).